The following is a 78-amino-acid chain: Large ribosomal subunit protein bL28 (78 aa).

This sequence belongs to the bacterial ribosomal protein bL28 family.

The chain is Large ribosomal subunit protein bL28 from Erwinia tasmaniensis (strain DSM 17950 / CFBP 7177 / CIP 109463 / NCPPB 4357 / Et1/99).